The sequence spans 363 residues: Peptide chain release factor 2 (363 aa).

Residue Gln251 is modified to N5-methylglutamine.

This sequence belongs to the prokaryotic/mitochondrial release factor family. Post-translationally, methylated by PrmC. Methylation increases the termination efficiency of RF2.

It localises to the cytoplasm. In terms of biological role, peptide chain release factor 2 directs the termination of translation in response to the peptide chain termination codons UGA and UAA. The protein is Peptide chain release factor 2 of Helicobacter pylori (strain HPAG1).